A 372-amino-acid chain; its full sequence is DNA replication and repair protein RecF (372 aa).

An ATP-binding site is contributed by 30 to 37 (GENAQGKT).

It belongs to the RecF family.

It is found in the cytoplasm. Functionally, the RecF protein is involved in DNA metabolism; it is required for DNA replication and normal SOS inducibility. RecF binds preferentially to single-stranded, linear DNA. It also seems to bind ATP. The protein is DNA replication and repair protein RecF of Exiguobacterium sp. (strain ATCC BAA-1283 / AT1b).